A 374-amino-acid polypeptide reads, in one-letter code: Ribosomal RNA large subunit methyltransferase G (374 aa).

Belongs to the methyltransferase superfamily. RlmG family.

Its subcellular location is the cytoplasm. The catalysed reaction is guanosine(1835) in 23S rRNA + S-adenosyl-L-methionine = N(2)-methylguanosine(1835) in 23S rRNA + S-adenosyl-L-homocysteine + H(+). In terms of biological role, specifically methylates the guanine in position 1835 (m2G1835) of 23S rRNA. This chain is Ribosomal RNA large subunit methyltransferase G, found in Pseudomonas paraeruginosa (strain DSM 24068 / PA7) (Pseudomonas aeruginosa (strain PA7)).